Consider the following 212-residue polypeptide: ER lumen protein-retaining receptor 2 (212 aa).

Over 1 to 4 (MNIF) the chain is Lumenal. The helical transmembrane segment at 5–24 (RLTGDLSHLAAIIILLLKIW) threads the bilayer. The Cytoplasmic portion of the chain corresponds to 25-32 (KSRSCAGI). The helical transmembrane segment at 33-52 (SGKSQILFALVFTTRYLDLL) threads the bilayer. The segment at 47–48 (RY) is interaction with the K-D-E-L motif on target proteins. Topologically, residues 53 to 58 (TSFISL) are lumenal. Residues 59–79 (YNTCMKVIYIGCAYATVYLIY) form a helical membrane-spanning segment. Over 80–92 (AKFRATYDGNHDT) the chain is Cytoplasmic. A helical membrane pass occupies residues 93-110 (FRAEFLVVPVGGLAFLVN). The Lumenal portion of the chain corresponds to 111 to 116 (HDFSPL). The helical transmembrane segment at 117–135 (EILWTFSIYLESVAILPQL) threads the bilayer. The Cytoplasmic portion of the chain corresponds to 136–149 (FMISKTGEAETITT). Residues 150 to 168 (HYLFCLGVYRALYLFNWIW) form a helical membrane-spanning segment. The tract at residues 159-169 (RALYLFNWIWR) is interaction with the K-D-E-L motif on target proteins. Over 169-178 (RFYFEGFFDM) the chain is Lumenal. The helical transmembrane segment at 179–199 (IAIVAGVVQTILYCDFFYLYV) threads the bilayer. Residues 200 to 212 (TKVLKGKKLSLPA) lie on the Cytoplasmic side of the membrane. The interval 204 to 207 (KGKK) is important for recycling of cargo proteins with the sequence motif K-D-E-L from the Golgi to the endoplasmic reticulum.

It belongs to the ERD2 family.

The protein resides in the endoplasmic reticulum membrane. It is found in the golgi apparatus membrane. Its subcellular location is the cytoplasmic vesicle. The protein localises to the COPI-coated vesicle membrane. Functionally, receptor for the C-terminal sequence motif K-D-E-L that is present on endoplasmic reticulum resident proteins and that mediates their recycling from the Golgi back to the endoplasmic reticulum. Binding is pH dependent, and is optimal at pH 5-5.4. This Danio rerio (Zebrafish) protein is ER lumen protein-retaining receptor 2 (kdelr2).